A 241-amino-acid chain; its full sequence is MRPSGRTAQQLRPLTFTRHYTKYAEGAVLVEFGETRVLCTATVEEGVPRFLKGQNKGWITAEYSMLPRSTHQRHARESVKGKQGGRTLEIQRLIARALRAAVDLTKLGEFTIKLDCDVLQADGGTRTAAITGACVALQDALQKMRVEGKLKSNPMKGLVAAVSVGVVGGESICDLEYIEDAIAETDMNVVMIEEGAGRKIIEIQGTAEGAPFSHQQLLELLALADDGIKTIFQAQKKVLEK.

Residues Arg-86 and 124–126 (GTR) each bind phosphate.

The protein belongs to the RNase PH family. Homohexameric ring arranged as a trimer of dimers.

The catalysed reaction is tRNA(n+1) + phosphate = tRNA(n) + a ribonucleoside 5'-diphosphate. Its function is as follows. Phosphorolytic 3'-5' exoribonuclease that plays an important role in tRNA 3'-end maturation. Removes nucleotide residues following the 3'-CCA terminus of tRNAs; can also add nucleotides to the ends of RNA molecules by using nucleoside diphosphates as substrates, but this may not be physiologically important. Probably plays a role in initiation of 16S rRNA degradation (leading to ribosome degradation) during starvation. The polypeptide is Ribonuclease PH (Hamiltonella defensa subsp. Acyrthosiphon pisum (strain 5AT)).